A 309-amino-acid polypeptide reads, in one-letter code: Cytochrome c biogenesis protein CcsA (309 aa).

8 helical membrane passes run 18-38, 48-68, 73-93, 102-122, 148-168, 216-236, 250-267, and 279-299; these read LGLLVFYFLLINLPISLGAVF, LITILVNLLITLQLLFRWSIS, ISNLYESLYFLTWGITLGQLL, IIPSIAIPIELLTVAFACFVL, VMLSYAALIIGSLLSMSVLFI, SILVGFVLLTLGLISGAVWAN, TWAFISWLFYAAYLHMRI, and LASTGFLVVLVCYLGVNFLGI.

The protein belongs to the CcmF/CycK/Ccl1/NrfE/CcsA family. May interact with ccs1.

Its subcellular location is the cellular thylakoid membrane. Required during biogenesis of c-type cytochromes (cytochrome c6 and cytochrome f) at the step of heme attachment. The chain is Cytochrome c biogenesis protein CcsA from Prochlorococcus marinus (strain AS9601).